Consider the following 304-residue polypeptide: Nod factor export ATP-binding protein I (304 aa).

Residues 6 to 236 form the ABC transporter domain; sequence IDLAGVKKSF…HIGCQVIEIF (231 aa). Position 38-45 (38-45) interacts with ATP; the sequence is GPNGAGKS.

The protein belongs to the ABC transporter superfamily. Lipooligosaccharide exporter (TC 3.A.1.102) family. As to quaternary structure, the complex is composed of two ATP-binding proteins (NodI) and two transmembrane proteins (NodJ).

Its subcellular location is the cell inner membrane. Functionally, part of the ABC transporter complex NodIJ involved in the export of the nodulation factors (Nod factors), the bacterial signal molecules that induce symbiosis and subsequent nodulation induction. Nod factors are LCO (lipo-chitin oligosaccharide), a modified beta-1,4-linked N-acetylglucosamine oligosaccharide. This subunit is responsible for energy coupling to the transport system. The protein is Nod factor export ATP-binding protein I of Rhizobium sp. (strain N33).